Reading from the N-terminus, the 291-residue chain is Protease HtpX (291 aa).

The next 2 helical transmembrane spans lie at 4-24 and 36-56; these read ILLFLATNLAVLVIASITLKL and GSLLVFCAVFGFAGSLVSLFI. Position 142 (His142) interacts with Zn(2+). Residue Glu143 is part of the active site. His146 contacts Zn(2+). 2 helical membrane-spanning segments follow: residues 150-170 and 193-213; these read GDMVTLALIQGVVNTFVMFFA and FVATIFAELVLGILASIIVMW. Residue Glu219 participates in Zn(2+) binding.

Belongs to the peptidase M48B family. Zn(2+) serves as cofactor.

It localises to the cell inner membrane. The sequence is that of Protease HtpX from Pseudomonas aeruginosa (strain LESB58).